Consider the following 475-residue polypeptide: Peroxisome proliferator-activated receptor gamma (475 aa).

Ser82 is subject to Phosphoserine; by MAPK. A DNA-binding region (nuclear receptor) is located at residues 106 to 180 (AIECRVCSDK…VGMSHNAIRF (75 aa)). 2 NR C4-type zinc fingers span residues 109-129 (CRVC…CEGC) and 146-168 (CDLN…FQKC). The interval 175–250 (HNAIRFGRMP…DKSPFVIYDM (76 aa)) is interaction with FAM120B. One can recognise an NR LBD domain in the interval 208–473 (DLRALAKHLY…HPLLQEIYKD (266 aa)). A Glycyl lysine isopeptide (Lys-Gly) (interchain with G-Cter in ubiquitin) cross-link involves residue Lys222. Residues 465–473 (PLLQEIYKD) carry the 9aaTAD motif.

It belongs to the nuclear hormone receptor family. NR1 subfamily. As to quaternary structure, interacts with FOXO1 (acetylated form). Heterodimer with other nuclear receptors, such as RXRA. The heterodimer with the retinoic acid receptor RXRA is called adipocyte-specific transcription factor ARF6. Interacts with NCOA6 coactivator, leading to a strong increase in transcription of target genes. Interacts with coactivator PPARBP, leading to a mild increase in transcription of target genes. Interacts with NOCA7 in a ligand-inducible manner. Interacts with NCOA1 and NCOA2 LXXLL motifs. Interacts with ASXL1, ASXL2, DNTTIP2, FAM120B, MAP2K1/MEK1, NR0B2, PDPK1, PRDM16, PRMT2 and TGFB1I1. Interacts (when activated by agonist) with PPP5C. Interacts with HELZ2 and THRAP3; the interaction stimulates the transcriptional activity of PPARG. Interacts with PER2, the interaction is ligand dependent and blocks PPARG recruitment to target promoters. Interacts with NOCT. Interacts with ACTN4. Interacts (when in the liganded conformation) with GPS2. Interacts with CRY1 and CRY2 in a ligand-dependent manner. In the absence of hormonal ligand, interacts with TACC1. In macrophages, interacts with PAQR3 and STUB1; the interactions promote PPARG poylubiquitination and STUB1-mediated degradation. In terms of processing, phosphorylated at basal conditions and dephosphorylated when treated with the ligand. May be dephosphorylated by PPP5C. The phosphorylated form may be inactive and dephosphorylation induces adipogenic activity. Ubiquitinated by E3 ubiquitin-protein ligase complex containing FBXO9; leading to proteasomal degradation. Ubiquitinated at Lys-222 by TRIM55 leading to proteasomal degradation. Ubiquitinated by E3 ubiquitin-protein ligase STUB1/CHIP; leading to proteasomal degradation.

The protein resides in the nucleus. It localises to the cytoplasm. With respect to regulation, PDPK1 activates its transcriptional activity independently of its kinase activity. Functionally, nuclear receptor that binds peroxisome proliferators such as hypolipidemic drugs and fatty acids. Once activated by a ligand, the nuclear receptor binds to DNA specific PPAR response elements (PPRE) and modulates the transcription of its target genes, such as acyl-CoA oxidase. It therefore controls the peroxisomal beta-oxidation pathway of fatty acids. Key regulator of adipocyte differentiation and glucose homeostasis. ARF6 acts as a key regulator of the tissue-specific adipocyte P2 (aP2) enhancer. Acts as a critical regulator of gut homeostasis by suppressing NF-kappa-B-mediated pro-inflammatory responses. Plays a role in the regulation of cardiovascular circadian rhythms by regulating the transcription of BMAL1 in the blood vessels. This is Peroxisome proliferator-activated receptor gamma (PPARG) from Oryctolagus cuniculus (Rabbit).